The primary structure comprises 369 residues: Queuine tRNA-ribosyltransferase (369 aa).

D89 serves as the catalytic Proton acceptor. Substrate is bound by residues 89 to 93, D143, Q187, and G214; that span reads DSGGF. An RNA binding region spans residues 245-251; sequence GVGTPED. The active-site Nucleophile is D264. Positions 269 to 273 are RNA binding; important for wobble base 34 recognition; the sequence is TRNAR. Residues C302, C304, C307, and H333 each coordinate Zn(2+).

This sequence belongs to the queuine tRNA-ribosyltransferase family. Homodimer. Within each dimer, one monomer is responsible for RNA recognition and catalysis, while the other monomer binds to the replacement base PreQ1. It depends on Zn(2+) as a cofactor.

The enzyme catalyses 7-aminomethyl-7-carbaguanine + guanosine(34) in tRNA = 7-aminomethyl-7-carbaguanosine(34) in tRNA + guanine. It functions in the pathway tRNA modification; tRNA-queuosine biosynthesis. Its function is as follows. Catalyzes the base-exchange of a guanine (G) residue with the queuine precursor 7-aminomethyl-7-deazaguanine (PreQ1) at position 34 (anticodon wobble position) in tRNAs with GU(N) anticodons (tRNA-Asp, -Asn, -His and -Tyr). Catalysis occurs through a double-displacement mechanism. The nucleophile active site attacks the C1' of nucleotide 34 to detach the guanine base from the RNA, forming a covalent enzyme-RNA intermediate. The proton acceptor active site deprotonates the incoming PreQ1, allowing a nucleophilic attack on the C1' of the ribose to form the product. After dissociation, two additional enzymatic reactions on the tRNA convert PreQ1 to queuine (Q), resulting in the hypermodified nucleoside queuosine (7-(((4,5-cis-dihydroxy-2-cyclopenten-1-yl)amino)methyl)-7-deazaguanosine). The chain is Queuine tRNA-ribosyltransferase from Dechloromonas aromatica (strain RCB).